Consider the following 65-residue polypeptide: Conotoxin tx3c (65 aa).

Positions 1–19 are cleaved as a signal peptide; that stretch reads MFKLGVLLTICLLLFSLNA. The propeptide occupies 20-50; that stretch reads VPLDGDQPADQPAERLLDDISFENNPFYDPA. 3 disulfide bridges follow: C53/C64, C54/C60, and C57/C63. Residue P62 is modified to 4-hydroxyproline; partial. Position 64 is a cysteine amide (C64).

Post-translationally, the hydroxylation at Pro-62 is observed in PubMed:15924437, PubMed:19380747 and PubMed:22709442, and the non-hydroxylation is described in PubMed:22709442. As to expression, expressed by the venom duct.

Its subcellular location is the secreted. In terms of biological role, causes scratching in mice. The chain is Conotoxin tx3c from Conus textile (Cloth-of-gold cone).